The chain runs to 79 residues: Acyl carrier protein (79 aa).

Positions 4–79 (AEIKDKVYDI…QAIDYIVNKK (76 aa)) constitute a Carrier domain. S39 is subject to O-(pantetheine 4'-phosphoryl)serine.

This sequence belongs to the acyl carrier protein (ACP) family. 4'-phosphopantetheine is transferred from CoA to a specific serine of apo-ACP by AcpS. This modification is essential for activity because fatty acids are bound in thioester linkage to the sulfhydryl of the prosthetic group.

It localises to the cytoplasm. It functions in the pathway lipid metabolism; fatty acid biosynthesis. Functionally, carrier of the growing fatty acid chain in fatty acid biosynthesis. This Pelodictyon phaeoclathratiforme (strain DSM 5477 / BU-1) protein is Acyl carrier protein.